Reading from the N-terminus, the 244-residue chain is 1-(5-phosphoribosyl)-5-[(5-phosphoribosylamino)methylideneamino] imidazole-4-carboxamide isomerase (244 aa).

The active-site Proton acceptor is the Asp-8. Catalysis depends on Asp-129, which acts as the Proton donor.

It belongs to the HisA/HisF family.

The protein resides in the cytoplasm. The enzyme catalyses 1-(5-phospho-beta-D-ribosyl)-5-[(5-phospho-beta-D-ribosylamino)methylideneamino]imidazole-4-carboxamide = 5-[(5-phospho-1-deoxy-D-ribulos-1-ylimino)methylamino]-1-(5-phospho-beta-D-ribosyl)imidazole-4-carboxamide. It participates in amino-acid biosynthesis; L-histidine biosynthesis; L-histidine from 5-phospho-alpha-D-ribose 1-diphosphate: step 4/9. This Thermodesulfovibrio yellowstonii (strain ATCC 51303 / DSM 11347 / YP87) protein is 1-(5-phosphoribosyl)-5-[(5-phosphoribosylamino)methylideneamino] imidazole-4-carboxamide isomerase.